The sequence spans 208 residues: Uracil phosphoribosyltransferase (208 aa).

Residues arginine 78, arginine 103, and 130–138 (DPMLATGGS) each bind 5-phospho-alpha-D-ribose 1-diphosphate. Uracil-binding positions include isoleucine 193 and 198-200 (GDA). 5-phospho-alpha-D-ribose 1-diphosphate is bound at residue aspartate 199.

Belongs to the UPRTase family. Mg(2+) serves as cofactor.

It catalyses the reaction UMP + diphosphate = 5-phospho-alpha-D-ribose 1-diphosphate + uracil. It functions in the pathway pyrimidine metabolism; UMP biosynthesis via salvage pathway; UMP from uracil: step 1/1. Allosterically activated by GTP. Catalyzes the conversion of uracil and 5-phospho-alpha-D-ribose 1-diphosphate (PRPP) to UMP and diphosphate. This is Uracil phosphoribosyltransferase from Photorhabdus laumondii subsp. laumondii (strain DSM 15139 / CIP 105565 / TT01) (Photorhabdus luminescens subsp. laumondii).